The primary structure comprises 558 residues: Tyrosine N-monooxygenase (558 aa).

The chain crosses the membrane as a helical span at residues 13–33 (VLAAPLLSSSAILKLLLFVVT). The tract at residues 48–67 (TTKCSSTTCASPPAGVGNPP) is disordered. Residues 49–65 (TKCSSTTCASPPAGVGN) show a composition bias toward low complexity. Positions 138, 167, 422, 491, and 493 each coordinate heme b.

The protein belongs to the cytochrome P450 family. Heme b serves as cofactor.

It localises to the endoplasmic reticulum membrane. It catalyses the reaction L-tyrosine + 2 reduced [NADPH--hemoprotein reductase] + 2 O2 = (E)-4-hydroxyphenylacetaldehyde oxime + 2 oxidized [NADPH--hemoprotein reductase] + CO2 + 3 H2O + 2 H(+). The enzyme catalyses L-tyrosine + reduced [NADPH--hemoprotein reductase] + O2 = N-hydroxy-L-tyrosine + oxidized [NADPH--hemoprotein reductase] + H2O + 2 H(+). The catalysed reaction is N-hydroxy-L-tyrosine + reduced [NADPH--hemoprotein reductase] + O2 = N,N-dihydroxy-L-tyrosine + oxidized [NADPH--hemoprotein reductase] + H2O + H(+). It carries out the reaction N,N-dihydroxy-L-tyrosine + H(+) = (E)-4-hydroxyphenylacetaldehyde oxime + CO2 + H2O. It functions in the pathway secondary metabolite biosynthesis; dhurrin biosynthesis; dhurrin from L-tyrosine: step 1/3. Its function is as follows. Cytochrome P450 involved in the biosynthesis of the cyanogenic glucoside dhurrin. Catalyzes the conversion of L-tyrosine to p-hydroxyphenylacetaldehyde oxime, via the N-hydroxy-L-tyrosine and N,N-dihydroxy-L-tyrosine intermediates. Produces the (E) isomer of the final oxime product. This chain is Tyrosine N-monooxygenase (CYP79A1), found in Sorghum bicolor (Sorghum).